Reading from the N-terminus, the 325-residue chain is Phospholipid phosphatase-related protein type 1 (325 aa).

The N-linked (GlcNAc...) asparagine glycan is linked to Asn5. 3 helical membrane-spanning segments follow: residues 13-33, 67-87, and 127-147; these read IIPC…LLAY, FISP…IIFI, and FIGV…AGQV. N-linked (GlcNAc...) asparagine glycosylation occurs at Asn163. The next 3 membrane-spanning stretches (helical) occupy residues 201–219, 226–244, and 257–277; these read AALS…TSTI, LAKP…LTGL, and VIAG…CVVH. Ser307 is subject to Phosphoserine. N-linked (GlcNAc...) asparagine glycosylation occurs at Asn316.

The protein belongs to the PA-phosphatase related phosphoesterase family. As to expression, highly expressed in the brain. Also found in the liver, kidney and testis. In the brain shows a strongest expression in the hippocampus and cerebellum.

It localises to the cell membrane. The protein localises to the cell projection. Its subcellular location is the neuron projection. Functionally, may play a role in neurite outgrowth and neurogenesis. This Rattus norvegicus (Rat) protein is Phospholipid phosphatase-related protein type 1.